The sequence spans 380 residues: Alcohol dehydrogenase 1 (380 aa).

Residues C48, T50, H70, C100, C103, C106, C114, and C178 each coordinate Zn(2+). An alcohol contacts are provided by T50 and H70. T50 contributes to the NAD(+) binding site. NAD(+) is bound by residues 203 to 208 (GLGAVG), D227, R232, T273, V296, 296 to 298 (VGV), and R373.

This sequence belongs to the zinc-containing alcohol dehydrogenase family. As to quaternary structure, homodimer. Zn(2+) is required as a cofactor.

The protein localises to the cytoplasm. The enzyme catalyses a primary alcohol + NAD(+) = an aldehyde + NADH + H(+). It catalyses the reaction a secondary alcohol + NAD(+) = a ketone + NADH + H(+). The polypeptide is Alcohol dehydrogenase 1 (Pisum sativum (Garden pea)).